A 277-amino-acid chain; its full sequence is MNMNGFDPFEWRSFYFPGMSREDAHKLLGEPRVSIGTFLMRDSSQPGEYSLSVREADEGNTVCHYLIVRDVKEDGTAGVKIAEQSFPDIPALLNHFKMRVLTEASLLSAYKKPIIEVVVGTFKFTGERETDLPFEQGERLEILSKTNNDWWEARNALGTTGLVPANYVQVQSGEFANERISKGTSQSSIGSSGNGAERFSSTSTSSENAEAHPTLPTTAKVTFDRVPNAYDPTQLRVKKGQTVRVLEKMSNGMYRAELDGQIGSVPFTYIRFNTANQ.

One can recognise an SH2 domain in the interval 14-112 (FYFPGMSRED…EASLLSAYKK (99 aa)). The region spanning 113-173 (PIIEVVVGTF…PANYVQVQSG (61 aa)) is the SH3 1 domain. The interval 179–217 (RISKGTSQSSIGSSGNGAERFSSTSTSSENAEAHPTLPT) is disordered. Residues 182 to 206 (KGTSQSSIGSSGNGAERFSSTSTSS) show a composition bias toward low complexity. The SH3 2 domain maps to 214-275 (TLPTTAKVTF…PFTYIRFNTA (62 aa)).

This sequence belongs to the CRK family. Interacts with ced-5 (via C-terminus which contains a candidate SH3-binding, proline-rich region). Forms a ternary complex with ced-5 and ced-12. Interacts (via SH-2 domain) with src-1 (when activated and phosphorylated at 'Tyr-416').

In terms of biological role, required for cell migration and engulfment of cell corpses but not for programmed cell death/apoptosis. Also has a role in the migration of the 2 gonadal distal tip cells (DTCs). The sequence is that of Cell death abnormality protein 2 from Caenorhabditis briggsae.